The sequence spans 213 residues: Peroxynitrite isomerase 2 (213 aa).

A GXWXGXG motif is present at residues 58–64 (GVWRGEG). Heme b-binding residues include Lys176 and His203.

Belongs to the nitrobindin family. As to quaternary structure, homodimer. Requires heme b as cofactor.

It carries out the reaction peroxynitrite = nitrate. The protein operates within nitrogen metabolism. Its function is as follows. Heme-binding protein able to scavenge peroxynitrite and to protect free L-tyrosine against peroxynitrite-mediated nitration, by acting as a peroxynitrite isomerase that converts peroxynitrite to nitrate. Therefore, this protein likely plays a role in peroxynitrite sensing and in the detoxification of reactive nitrogen and oxygen species (RNS and ROS, respectively). Is able to bind nitric oxide (NO) in vitro, but may act as a sensor of peroxynitrite levels in vivo. The polypeptide is Peroxynitrite isomerase 2 (Rhodococcus jostii (strain RHA1)).